The sequence spans 670 residues: Protein angel homolog 1 (670 aa).

Phosphoserine occurs at positions 77 and 105.

It belongs to the CCR4/nocturin family.

The sequence is that of Protein angel homolog 1 (ANGEL1) from Homo sapiens (Human).